Reading from the N-terminus, the 960-residue chain is Angiomotin-like protein 1 (960 aa).

The disordered stretch occupies residues 196 to 248; it reads SQFFRGQQPPPPPPQQQPGAVGHSYYMAGGASQKARTEGRPTVSRANSGQAHK. Phosphoserine is present on residues S243, S271, and S297. The stretch at 261-281 forms a coiled coil; it reads RSLSERIMQLSLERNGAKQHL. Disordered regions lie at residues 277–317, 381–407, and 413–432; these read AKQH…EYPF, LPFP…LHSV, and PPMA…SQQL. Low complexity predominate over residues 388-401; it reads QQHSPVSSQNSSVS. 2 coiled-coil regions span residues 440 to 641 and 667 to 697; these read VERA…WLER and ALME…VEES. Phosphoserine is present on S722. Residues 731-761 are a coiled coil; the sequence is SLEAHIWQEEEEVVQATRRCQDMEYTIKNLH. Residues 775–826 form a disordered region; the sequence is QQRSRKDAGKTDSSSLRPARSVPSIAAATGTHSRQTSLTSSQLAEERKEEKT. S795, S807, and S830 each carry phosphoserine. Positions 804 to 817 are enriched in polar residues; it reads GTHSRQTSLTSSQL. The segment at 842-952 is disordered; the sequence is NDHASTPLLP…NLLHKPEFPD (111 aa). Residues 845–870 show a composition bias toward low complexity; that stretch reads ASTPLLPTPSAATLSPPTPGTSASSA. Polar residues predominate over residues 898–911; sequence PTRSRLSGTPSNSP. S904 is subject to Phosphoserine. T906 is subject to Phosphothreonine. A Phosphoserine modification is found at S910. A PDZ-binding motif is present at residues 957–960; the sequence is EVLI.

The protein belongs to the angiomotin family. In terms of processing, polyubiquitinated by NEDD4, leading to proteasomal degradation.

It localises to the cell junction. It is found in the tight junction. Functionally, inhibits the Wnt/beta-catenin signaling pathway, probably by recruiting CTNNB1 to recycling endosomes and hence preventing its translocation to the nucleus. The chain is Angiomotin-like protein 1 (AMOTL1) from Bos taurus (Bovine).